The chain runs to 204 residues: Urease accessory protein UreG (204 aa).

13 to 20 serves as a coordination point for GTP; it reads GPVGSGKT.

The protein belongs to the SIMIBI class G3E GTPase family. UreG subfamily. Homodimer. UreD, UreF and UreG form a complex that acts as a GTP-hydrolysis-dependent molecular chaperone, activating the urease apoprotein by helping to assemble the nickel containing metallocenter of UreC. The UreE protein probably delivers the nickel.

The protein resides in the cytoplasm. Its function is as follows. Facilitates the functional incorporation of the urease nickel metallocenter. This process requires GTP hydrolysis, probably effectuated by UreG. The chain is Urease accessory protein UreG from Acinetobacter baylyi (strain ATCC 33305 / BD413 / ADP1).